A 347-amino-acid polypeptide reads, in one-letter code: NADH-ubiquinone oxidoreductase chain 2 (347 aa).

10 helical membrane passes run 1–21 (MNPL…AIVA), 25–45 (HWLM…PILM), 59–79 (YFLT…MNLV), 111–131 (FHFW…LILL), 149–169 (INLD…GWGG), 178–198 (IMAY…TYNP), 201–221 (TLLN…MFML), 237–257 (MPLL…LPPL), 274–294 (NSVI…YFYM), and 326–346 (LSPL…LALL).

It belongs to the complex I subunit 2 family. In terms of assembly, core subunit of respiratory chain NADH dehydrogenase (Complex I) which is composed of 45 different subunits. Interacts with TMEM242.

It localises to the mitochondrion inner membrane. It catalyses the reaction a ubiquinone + NADH + 5 H(+)(in) = a ubiquinol + NAD(+) + 4 H(+)(out). Core subunit of the mitochondrial membrane respiratory chain NADH dehydrogenase (Complex I) which catalyzes electron transfer from NADH through the respiratory chain, using ubiquinone as an electron acceptor. Essential for the catalytic activity and assembly of complex I. In Pteropus rodricensis (Rodriguez flying fox), this protein is NADH-ubiquinone oxidoreductase chain 2.